The chain runs to 453 residues: Regulatory protein opaque-2 (453 aa).

Residues 145–243 (SSVVTSDQRS…SNRESARRSR (99 aa)) are disordered. Residues 146–175 (SVVTSDQRSQGSNNHTGGSSIRNNPVQNKL) show a composition bias toward polar residues. Residues 207 to 216 (PSDEDMDGEV) are compositionally biased toward acidic residues. Basic and acidic residues predominate over residues 224-240 (PTEERVRKKESNRESAR). The bZIP domain occupies 225 to 288 (TEERVRKKES…NDANVDNRVL (64 aa)). A basic motif region spans residues 228–251 (RVRKKESNRESARRSRYRKAAHLK). Residues 253–274 (LEDQVAQLKAENSCLLRRIAAL) are leucine-zipper.

Belongs to the bZIP family. As to quaternary structure, interacts with the Dof zinc finger protein PBF. As to expression, seed endosperm.

The protein resides in the nucleus. In terms of biological role, involved in the regulation of the endosperm-specific production of albumin b-32 and other zein proteins. It is a trans-acting transcriptional activator that binds to the consensus sequence 5'-GATGAYRTGR-3'. The polypeptide is Regulatory protein opaque-2 (O2) (Zea mays (Maize)).